Reading from the N-terminus, the 87-residue chain is Histone H1.C6/H1.C9 (87 aa).

The tract at residues 1–87 is disordered; the sequence is MSDAAVPPKK…KKAVKKAPKK (87 aa). Over residues 11–87 the composition is skewed to basic residues; it reads ASPKKASPKK…KKAVKKAPKK (77 aa).

The protein resides in the nucleus. Its subcellular location is the chromosome. This is Histone H1.C6/H1.C9 from Trypanosoma cruzi.